Here is a 337-residue protein sequence, read N- to C-terminus: Metacaspase III c (337 aa).

2 propeptides span residues 1–6 (MGFLRR) and 116–125 (VPPAATGTRR). A Cysteine sulfenic acid (-SOH) modification is found at Cys202. Cys202 and Cys259 are disulfide-bonded. His207 is an active-site residue. Residues Asp224, Asp240, and Asp241 each coordinate Ca(2+). Residue Cys264 is part of the active site. A Ca(2+)-binding site is contributed by Asp271. The propeptide occupies 290-337 (NFDFKKLLGKFGIDDFDKFGGEALGKINGDALGKVGKDALGKLNKFFG).

The protein belongs to the peptidase C14B family. Post-translationally, auto-proteolytic cleavage into a large and a small subunit which probably remain associated by non-covalent bonds. In terms of processing, following oxidative stress, the oxidation of Cys-202 leads to the formation of a disulfide bond between Cys-202 and Cys-259 which enhances catalytic activity.

Activated by Ca(2+). Cysteine protease that cleaves specifically after arginine residues. This chain is Metacaspase III c, found in Phaeodactylum tricornutum (strain CCAP 1055/1).